The sequence spans 144 residues: Large ribosomal subunit protein uL13 (144 aa).

Belongs to the universal ribosomal protein uL13 family. As to quaternary structure, part of the 50S ribosomal subunit.

This protein is one of the early assembly proteins of the 50S ribosomal subunit, although it is not seen to bind rRNA by itself. It is important during the early stages of 50S assembly. The chain is Large ribosomal subunit protein uL13 from Clostridium botulinum (strain ATCC 19397 / Type A).